The sequence spans 432 residues: Tol-Pal system protein TolB (432 aa).

The signal sequence occupies residues 1 to 21; sequence MKKVIYTIVGFVFMWSTSVYA.

The protein belongs to the TolB family. In terms of assembly, the Tol-Pal system is composed of five core proteins: the inner membrane proteins TolA, TolQ and TolR, the periplasmic protein TolB and the outer membrane protein Pal. They form a network linking the inner and outer membranes and the peptidoglycan layer.

It localises to the periplasm. Functionally, part of the Tol-Pal system, which plays a role in outer membrane invagination during cell division and is important for maintaining outer membrane integrity. In Hydrogenovibrio crunogenus (strain DSM 25203 / XCL-2) (Thiomicrospira crunogena), this protein is Tol-Pal system protein TolB.